Here is a 316-residue protein sequence, read N- to C-terminus: Porphobilinogen deaminase (316 aa).

Position 249 is an S-(dipyrrolylmethanemethyl)cysteine (C249).

This sequence belongs to the HMBS family. Monomer. It depends on dipyrromethane as a cofactor.

It carries out the reaction 4 porphobilinogen + H2O = hydroxymethylbilane + 4 NH4(+). It functions in the pathway porphyrin-containing compound metabolism; protoporphyrin-IX biosynthesis; coproporphyrinogen-III from 5-aminolevulinate: step 2/4. Functionally, tetrapolymerization of the monopyrrole PBG into the hydroxymethylbilane pre-uroporphyrinogen in several discrete steps. The protein is Porphobilinogen deaminase of Nitrobacter winogradskyi (strain ATCC 25391 / DSM 10237 / CIP 104748 / NCIMB 11846 / Nb-255).